The chain runs to 448 residues: Methionine aminopeptidase 2 (448 aa).

A disordered region spans residues 1-94 (MAAQVTDALK…PRVLLSNLFP (94 aa)). Residues 37–50 (AEAEDSDDDDEEPV) are compositionally biased toward acidic residues. Over residues 61 to 74 (KKKRKRKKKPKKKA) the composition is skewed to basic residues. His201 provides a ligand contact to substrate. Residues Asp221, Asp232, and His301 each coordinate a divalent metal cation. His309 is a substrate binding site. 2 residues coordinate a divalent metal cation: Glu334 and Glu429.

This sequence belongs to the peptidase M24A family. Methionine aminopeptidase eukaryotic type 2 subfamily. Requires Co(2+) as cofactor. Zn(2+) is required as a cofactor. It depends on Mn(2+) as a cofactor. The cofactor is Fe(2+).

It is found in the cytoplasm. It carries out the reaction Release of N-terminal amino acids, preferentially methionine, from peptides and arylamides.. Functionally, cotranslationally removes the N-terminal methionine from nascent proteins. The N-terminal methionine is often cleaved when the second residue in the primary sequence is small and uncharged (Met-Ala-, Cys, Gly, Pro, Ser, Thr, or Val). This Botryotinia fuckeliana (strain B05.10) (Noble rot fungus) protein is Methionine aminopeptidase 2.